Reading from the N-terminus, the 597-residue chain is ATP-dependent lipid A-core flippase (597 aa).

The next 6 helical transmembrane spans lie at 26-46, 76-96, 138-158, 164-184, 263-283, and 292-312; these read LWPYIKPLIWVLIGAIVAMAV, WFVPAAVIGLALIRSLSQYAS, AIVFEVNQILNVLLSVLVTLV, VVFLLGYLFYLNWRLTLIVAV, QPLTQFLASIALAVVITIAVV, and VGGFVAFVTSMLLIISPLKHL. The 284-residue stretch at 38 to 321 folds into the ABC transmembrane type-1 domain; it reads IGAIVAMAVS…LMDVNQPLQR (284 aa). One can recognise an ABC transporter domain in the interval 353 to 590; it reads VEFRDVSFVY…DGLYAHLHRI (238 aa). 390-397 contacts ATP; sequence GPSGSGKT.

The protein belongs to the ABC transporter superfamily. Lipid exporter (TC 3.A.1.106) family. Homodimer.

Its subcellular location is the cell inner membrane. It carries out the reaction ATP + H2O + lipid A-core oligosaccharideSide 1 = ADP + phosphate + lipid A-core oligosaccharideSide 2.. In terms of biological role, involved in lipopolysaccharide (LPS) biosynthesis. Translocates lipid A-core from the inner to the outer leaflet of the inner membrane. Transmembrane domains (TMD) form a pore in the inner membrane and the ATP-binding domain (NBD) is responsible for energy generation. The sequence is that of ATP-dependent lipid A-core flippase from Paraburkholderia xenovorans (strain LB400).